The primary structure comprises 160 residues: UPF0225 protein CGSHiGG_04185 (160 aa).

The protein belongs to the UPF0225 family.

This chain is UPF0225 protein CGSHiGG_04185, found in Haemophilus influenzae (strain PittGG).